We begin with the raw amino-acid sequence, 422 residues long: MLDINFIESNLVKVKEQLNKRSGDYSLIIDEAVELNVQRKSILKEVENLKANKNNLSKQVGELMRNKQSDEANKIKEEVTLINSKIEKLDDSLKLVQEQLTSKLQNIPNIPNDNMPIGNDDNDNVEVRQWGNELIKKHNTPHWDIADKLKLVDFEAGPKLSGSRFVVYTGLGAKLVRSLSNILLNLHTSKGYTEITVPLLVNPQAMYGTGQLPKFKEDAYITTNDQYLIPTGEVPLTNLHAGEILDLNQLPIHYTTYSQCFRQEAGSAGRDTKGLIRLHQFNKVELVKITNQESSEAELQAMVNDAEAVLQLFNLPYRVVELCTGDVGFSSSKTYDLEVWFPEQNKYREISSCSNCTDFQARNMQTRYRDANGEVKLAHTLNGSGVAIDRLIAAILENYWDGEKLILPTALKPYFDNKEYID.

231-233 (TGE) provides a ligand contact to L-serine. 262-264 (RQE) serves as a coordination point for ATP. E285 is a binding site for L-serine. 349-352 (EISS) contributes to the ATP binding site. An L-serine-binding site is contributed by S384.

It belongs to the class-II aminoacyl-tRNA synthetase family. Type-1 seryl-tRNA synthetase subfamily. As to quaternary structure, homodimer. The tRNA molecule binds across the dimer.

It localises to the cytoplasm. It catalyses the reaction tRNA(Ser) + L-serine + ATP = L-seryl-tRNA(Ser) + AMP + diphosphate + H(+). The catalysed reaction is tRNA(Sec) + L-serine + ATP = L-seryl-tRNA(Sec) + AMP + diphosphate + H(+). The protein operates within aminoacyl-tRNA biosynthesis; selenocysteinyl-tRNA(Sec) biosynthesis; L-seryl-tRNA(Sec) from L-serine and tRNA(Sec): step 1/1. Its function is as follows. Catalyzes the attachment of serine to tRNA(Ser). Is also able to aminoacylate tRNA(Sec) with serine, to form the misacylated tRNA L-seryl-tRNA(Sec), which will be further converted into selenocysteinyl-tRNA(Sec). The chain is Serine--tRNA ligase from Mesoplasma florum (strain ATCC 33453 / NBRC 100688 / NCTC 11704 / L1) (Acholeplasma florum).